The following is a 150-amino-acid chain: Large ribosomal subunit protein uL23m (150 aa).

The protein belongs to the universal ribosomal protein uL23 family. Component of the mitochondrial ribosome large subunit (39S) which comprises a 16S rRNA and about 50 distinct proteins.

Its subcellular location is the mitochondrion. The polypeptide is Large ribosomal subunit protein uL23m (mRpL23) (Drosophila melanogaster (Fruit fly)).